We begin with the raw amino-acid sequence, 75 residues long: Putative defensin-like protein 55 (75 aa).

The signal sequence occupies residues M1 to S19. Cystine bridges form between C39-C73, C43-C66, C52-C71, and C56-C72.

This sequence belongs to the DEFL family.

It localises to the secreted. The polypeptide is Putative defensin-like protein 55 (Arabidopsis thaliana (Mouse-ear cress)).